The following is a 623-amino-acid chain: Putative ABC transporter ATP-binding protein MG014 homolog (623 aa).

One can recognise an ABC transmembrane type-1 domain in the interval 16 to 325; the sequence is LILAPLFTFA…YIVLGLILTS (310 aa). The next 6 membrane-spanning stretches (helical) occupy residues 27–47, 86–106, 157–177, 180–200, 266–286, and 307–327; these read IIID…VFSI, VILL…CASI, FLRL…FAIA, SDMS…IGIL, NIPF…LLVF, and IFAF…TSLT. The region spanning 365-611 is the ABC transporter domain; the sequence is LEFKNVAFGL…CDIYVKMKQA (247 aa). An ATP-binding site is contributed by 400-407; that stretch reads GPTGSGKS.

It belongs to the ABC transporter superfamily.

The protein localises to the cell membrane. The protein is Putative ABC transporter ATP-binding protein MG014 homolog of Mycoplasma pneumoniae (strain ATCC 29342 / M129 / Subtype 1) (Mycoplasmoides pneumoniae).